We begin with the raw amino-acid sequence, 623 residues long: Pyranose 2-oxidase (623 aa).

A signal peptide spans 1–28; sequence MSTSSSDPFFNFAKSSFRSAAAQKASAS. Residues 29-38 constitute a propeptide that is removed on maturation; the sequence is SLPPLPGPDK. Tele-8alpha-FAD histidine is present on H167. Substrate contacts are provided by Q448 and H450. H548 acts as the Proton acceptor in catalysis. N593 is a catalytic residue.

The protein belongs to the GMC oxidoreductase family. In terms of assembly, homotetramer. The cofactor is FAD.

Its subcellular location is the periplasm. It carries out the reaction D-glucose + O2 = 2-dehydro-D-glucose + H2O2. Catalyzes the oxidation of various aldopyranoses and disaccharides on carbon-2 to the corresponding 2-keto sugars concomitant with the reduction of O(2) to H(2)O(2). Plays an important role in lignin degradation of wood rot fungi by supplying the essential cosubstrate H(2)O(2) for the ligninolytic peroxidases, lignin peroxidase and manganese-dependent peroxidase. This chain is Pyranose 2-oxidase (p2ox), found in Peniophora sp. (strain SG) (White-rot fungus).